The following is a 263-amino-acid chain: Glycerol uptake facilitator protein (263 aa).

Over 1–7 (MNIYRKK) the chain is Cytoplasmic. A helical transmembrane segment spans residues 8 to 36 (NIIKKCFMEFFGTGLVMFFGIGCLAASKL). Over 37 to 41 (TNANF) the chain is Extracellular. Residues 42–62 (TQFEISCIWGFGVSIAIYFSS) traverse the membrane as a helical segment. The Cytoplasmic segment spans residues 63-65 (SIS). Residues 66 to 69 (GAHL) lie within the membrane without spanning it. Positions 70–72 (NPA) match the NPA 1 motif. Residues 70 to 80 (NPAVTIFFWLS) constitute an intramembrane region (helical). The Cytoplasmic portion of the chain corresponds to 81–86 (SKLNKR). A helical transmembrane segment spans residues 87–110 (KVLPYIISQTLGSFFFTMLTYYLY). Topologically, residues 111-145 (NNLLISFERNNNVVRGTQESLNLASIFCVYPNYNN) are extracellular. Residues 146–171 (SFIYDFIIEIFSTALFILIVLEFNNR) traverse the membrane as a helical segment. Topologically, residues 172-181 (NSNYFLYNRS) are cytoplasmic. The chain crosses the membrane as a helical span at residues 182-198 (VAPILTGFLVCMINLVI). The Extracellular segment spans residues 199–202 (NPLN). An intramembrane segment occupies 203–206 (NISL). The short motif at 207-209 (NPA) is the NPA 2 element. Positions 207 to 220 (NPARDLGPKILLSL) form an intramembrane region, helical. Topologically, residues 221–236 (TGWGLFSFTGGNDNIL) are extracellular. A helical transmembrane segment spans residues 237-259 (YCFIPIMGPILGANLGGWIHKTL). At 260-263 (INNS) the chain is on the cytoplasmic side.

This sequence belongs to the MIP/aquaporin (TC 1.A.8) family.

It is found in the cell membrane. The enzyme catalyses glycerol(in) = glycerol(out). Functionally, mediates glycerol diffusion across the cytoplasmic membrane via a pore-type mechanism. This is Glycerol uptake facilitator protein (glpF) from Buchnera aphidicola subsp. Acyrthosiphon pisum (strain APS) (Acyrthosiphon pisum symbiotic bacterium).